A 65-amino-acid chain; its full sequence is Large ribosomal subunit protein bL35 (65 aa).

Basic residues predominate over residues 1 to 16; the sequence is MPKMKTHRASAKRFKK. The interval 1-24 is disordered; that stretch reads MPKMKTHRASAKRFKKTANGGLKS.

Belongs to the bacterial ribosomal protein bL35 family.

This chain is Large ribosomal subunit protein bL35, found in Leuconostoc mesenteroides subsp. mesenteroides (strain ATCC 8293 / DSM 20343 / BCRC 11652 / CCM 1803 / JCM 6124 / NCDO 523 / NBRC 100496 / NCIMB 8023 / NCTC 12954 / NRRL B-1118 / 37Y).